Reading from the N-terminus, the 338-residue chain is UDP-glucose 4-epimerase (338 aa).

NAD(+) is bound by residues 11 to 12 (YI), 31 to 36 (DNLCNS), 58 to 59 (DI), 80 to 84 (FAGLK), N99, S124, Y149, K153, and F178. The substrate site is built by S124 and Y149. The Proton acceptor role is filled by Y149. Residues N179, 199-200 (NL), 216-218 (AIF), R231, 292-295 (REGD), and Y299 each bind substrate.

It belongs to the NAD(P)-dependent epimerase/dehydratase family. Homodimer. Requires NAD(+) as cofactor.

The catalysed reaction is UDP-alpha-D-glucose = UDP-alpha-D-galactose. The protein operates within carbohydrate metabolism; galactose metabolism. Its function is as follows. Involved in the metabolism of galactose. Catalyzes the conversion of UDP-galactose (UDP-Gal) to UDP-glucose (UDP-Glc) through a mechanism involving the transient reduction of NAD. This Yersinia pestis protein is UDP-glucose 4-epimerase (galE).